Consider the following 934-residue polypeptide: LPS-assembly protein LptD (934 aa).

An N-terminal signal peptide occupies residues 1–33 (MALKSPAFRRKFPLLVTGGLLALQPFATSYVVA). The segment at 52–86 (KSPVNNLPPRPVHDGAALTSGTEAPSAEAESADKP) is disordered.

It belongs to the LptD family. In terms of assembly, component of the lipopolysaccharide transport and assembly complex. Interacts with LptE and LptA.

It is found in the cell outer membrane. Its function is as follows. Together with LptE, is involved in the assembly of lipopolysaccharide (LPS) at the surface of the outer membrane. The chain is LPS-assembly protein LptD from Pseudomonas putida (strain W619).